The chain runs to 127 residues: Large ribosomal subunit protein bL19 (127 aa).

This sequence belongs to the bacterial ribosomal protein bL19 family.

Functionally, this protein is located at the 30S-50S ribosomal subunit interface and may play a role in the structure and function of the aminoacyl-tRNA binding site. This is Large ribosomal subunit protein bL19 from Ruegeria pomeroyi (strain ATCC 700808 / DSM 15171 / DSS-3) (Silicibacter pomeroyi).